The chain runs to 210 residues: Large ribosomal subunit protein uL3 (210 aa).

Positions 136-156 (THGTEKAHRSGGSIGNNTEPG) are disordered.

Belongs to the universal ribosomal protein uL3 family. In terms of assembly, part of the 50S ribosomal subunit. Forms a cluster with proteins L14 and L19.

Functionally, one of the primary rRNA binding proteins, it binds directly near the 3'-end of the 23S rRNA, where it nucleates assembly of the 50S subunit. The polypeptide is Large ribosomal subunit protein uL3 (Solidesulfovibrio magneticus (strain ATCC 700980 / DSM 13731 / RS-1) (Desulfovibrio magneticus)).